A 403-amino-acid chain; its full sequence is Phosphopentomutase 2 (403 aa).

The Mn(2+) site is built by Asp13, Asp298, His303, Asp339, His340, and His351.

This sequence belongs to the phosphopentomutase family. Mn(2+) serves as cofactor.

The protein localises to the cytoplasm. The catalysed reaction is 2-deoxy-alpha-D-ribose 1-phosphate = 2-deoxy-D-ribose 5-phosphate. It catalyses the reaction alpha-D-ribose 1-phosphate = D-ribose 5-phosphate. It participates in carbohydrate degradation; 2-deoxy-D-ribose 1-phosphate degradation; D-glyceraldehyde 3-phosphate and acetaldehyde from 2-deoxy-alpha-D-ribose 1-phosphate: step 1/2. In terms of biological role, isomerase that catalyzes the conversion of deoxy-ribose 1-phosphate (dRib-1-P) and ribose 1-phosphate (Rib-1-P) to deoxy-ribose 5-phosphate (dRib-5-P) and ribose 5-phosphate (Rib-5-P), respectively. The protein is Phosphopentomutase 2 of Streptococcus agalactiae serotype Ia (strain ATCC 27591 / A909 / CDC SS700).